Consider the following 123-residue polypeptide: Small ribosomal subunit protein cS23 (123 aa).

This sequence belongs to the chloroplast-specific ribosomal protein cS23 family. Part of the 30S ribosomal subunit.

It localises to the plastid. The protein resides in the chloroplast. Probably a ribosomal protein or a ribosome-associated protein. In Mesostigma viride (Green alga), this protein is Small ribosomal subunit protein cS23 (ycf65).